A 70-amino-acid polypeptide reads, in one-letter code: SPbeta prophage-derived uncharacterized protein YotJ (70 aa).

The protein is SPbeta prophage-derived uncharacterized protein YotJ (yotJ) of Bacillus subtilis (strain 168).